The primary structure comprises 157 residues: Stalk-specific protein B (157 aa).

The signal sequence occupies residues 1–19 (MRSILILLSLLLTIAFASA).

It is found in the secreted. In Dictyostelium discoideum (Social amoeba), this protein is Stalk-specific protein B (staB).